The following is a 61-amino-acid chain: MHNYYKIVLIMVAFFAVIITFSNIQVEGAVCNLKRCQLSCRSLGLLGKCIGDKCECVKHGK.

Residues 1–28 form the signal peptide; the sequence is MHNYYKIVLIMVAFFAVIITFSNIQVEG. 3 cysteine pairs are disulfide-bonded: C31/C49, C36/C54, and C40/C56. A [R/K]XCQ motif region spans residues 34–37; that stretch reads KRCQ. Histidine amide is present on H59.

The protein belongs to the short scorpion toxin superfamily. Potassium channel inhibitor family. Alpha-KTx 05 subfamily. As to expression, expressed by the venom gland.

The protein localises to the secreted. Functionally, blocks small conductance calcium-activated potassium channels (KCNN, SK). Has also been shown to weakly inhibit Kv11.1/KCNH2/ERG1, Kv1.2/KCNA2, Kv1.3/KCNA3 and Kv2.1/KCNB1 voltage-gated potassium channels. This is Potassium channel toxin alpha-KTx 5.3 from Olivierus martensii (Manchurian scorpion).